A 166-amino-acid polypeptide reads, in one-letter code: Urease accessory protein UreE (166 aa).

Belongs to the UreE family.

It is found in the cytoplasm. Its function is as follows. Involved in urease metallocenter assembly. Binds nickel. Probably functions as a nickel donor during metallocenter assembly. The polypeptide is Urease accessory protein UreE (Pseudomonas fluorescens (strain Pf0-1)).